We begin with the raw amino-acid sequence, 234 residues long: Glucosamine-6-phosphate deaminase (234 aa).

The active-site Proton acceptor; for enolization step is the aspartate 62. Residue asparagine 128 is the For ring-opening step of the active site. Histidine 130 functions as the Proton acceptor; for ring-opening step in the catalytic mechanism. The active-site For ring-opening step is the glutamate 135.

This sequence belongs to the glucosamine/galactosamine-6-phosphate isomerase family. NagB subfamily.

It carries out the reaction alpha-D-glucosamine 6-phosphate + H2O = beta-D-fructose 6-phosphate + NH4(+). Its pathway is amino-sugar metabolism; N-acetylneuraminate degradation; D-fructose 6-phosphate from N-acetylneuraminate: step 5/5. Its function is as follows. Catalyzes the reversible isomerization-deamination of glucosamine 6-phosphate (GlcN6P) to form fructose 6-phosphate (Fru6P) and ammonium ion. The polypeptide is Glucosamine-6-phosphate deaminase (Streptococcus pyogenes serotype M1).